The following is a 324-amino-acid chain: MSVEDGGLPGLGGPGQARWTLMLLLSTATYGAHAPLLALCHVDGRVPFRPSSAVLLTELTKLLLCALSLLVGWQAWPPRTPPWRQAAPFALSALLYGANNNLVIHLQHYMDPSTYQVLSNLKIGSTALFYCLCLRRRLSARQGLALLLLMAAGACYAAGGLRDPGSPLPESPSTAASGPVPLHVTAPGLLLLLLYCLISGLSSVYTELLLKRQRLPLALQNLFLYTFGVLLNLGLHAGGGPGPGLLEGFSGWAALVVLSQALNGLLMSAVMKHGSSITRLFVVSCSLVVNAVLSAALLRLQLTAAFFLAALLIGLAVHLYYGSR.

The Cytoplasmic portion of the chain corresponds to 1–18 (MSVEDGGLPGLGGPGQAR). The chain crosses the membrane as a helical span at residues 19 to 39 (WTLMLLLSTATYGAHAPLLAL). The Lumenal segment spans residues 40–52 (CHVDGRVPFRPSS). A helical transmembrane segment spans residues 53–73 (AVLLTELTKLLLCALSLLVGW). Residues 74–85 (QAWPPRTPPWRQ) lie on the Cytoplasmic side of the membrane. A helical transmembrane segment spans residues 86 to 106 (AAPFALSALLYGANNNLVIHL). Residues 107-140 (QHYMDPSTYQVLSNLKIGSTALFYCLCLRRRLSA) are Lumenal-facing. Residues 141–161 (RQGLALLLLMAAGACYAAGGL) traverse the membrane as a helical segment. The Cytoplasmic segment spans residues 162 to 177 (RDPGSPLPESPSTAAS). Residues 178–198 (GPVPLHVTAPGLLLLLLYCLI) form a helical membrane-spanning segment. Residues 199–214 (SGLSSVYTELLLKRQR) lie on the Lumenal side of the membrane. The helical transmembrane segment at 215–235 (LPLALQNLFLYTFGVLLNLGL) threads the bilayer. Residues 236-248 (HAGGGPGPGLLEG) lie on the Cytoplasmic side of the membrane. Residues 249–271 (FSGWAALVVLSQALNGLLMSAVM) traverse the membrane as a helical segment. Topologically, residues 272 to 279 (KHGSSITR) are lumenal. The chain crosses the membrane as a helical span at residues 280 to 300 (LFVVSCSLVVNAVLSAALLRL). The Cytoplasmic portion of the chain corresponds to 301–324 (QLTAAFFLAALLIGLAVHLYYGSR).

The protein belongs to the nucleotide-sugar transporter family. SLC35A subfamily. In terms of assembly, found in a complex with SLC35A2 and SLC35A3.

It is found in the golgi apparatus membrane. It carries out the reaction CDP-L-ribitol(in) + CDP(out) = CDP-L-ribitol(out) + CDP(in). In terms of biological role, mediates the transport of CDP-ribitol. Does not exhibit CMP-sialic acid, UDP-galactose and UDP-N-acetylglucosamine transport activity. This Sus scrofa (Pig) protein is Probable UDP-sugar transporter protein SLC35A4.